A 314-amino-acid chain; its full sequence is Formylglycine-generating enzyme (314 aa).

Residues 1–20 are compositionally biased toward low complexity; that stretch reads MAVAAPSPAAAAEPGPAARP. The interval 1–31 is disordered; the sequence is MAVAAPSPAAAAEPGPAARPRSTRGQVRLPG. Ca(2+) is bound by residues Asn-194, Ile-195, Asp-208, and His-210. Cu(2+) contacts are provided by Cys-272 and Cys-277.

Belongs to the sulfatase-modifying factor family. Cu(2+) serves as cofactor.

It carries out the reaction L-cysteinyl-[sulfatase] + 2 a thiol + O2 = an organic disulfide + 3-oxo-L-alanyl-[sulfatase] + hydrogen sulfide + H2O + H(+). Its pathway is protein modification; sulfatase oxidation. In terms of biological role, oxidase that catalyzes the conversion of cysteine to 3-oxoalanine on target proteins. 3-oxoalanine modification, which is also named formylglycine (fGly), occurs in the maturation of arylsulfatases and some alkaline phosphatases that use the hydrated form of 3-oxoalanine as a catalytic nucleophile. This Streptomyces coelicolor (strain ATCC BAA-471 / A3(2) / M145) protein is Formylglycine-generating enzyme.